Here is a 249-residue protein sequence, read N- to C-terminus: ATP synthase subunit a, chloroplastic (249 aa).

5 helical membrane passes run 40-60 (QVLI…VLAV), 97-117 (VPFI…GALL), 136-156 (INTT…AGLS), 201-221 (LVVV…VMFL), and 222-242 (GLFT…AYIG).

It belongs to the ATPase A chain family. As to quaternary structure, F-type ATPases have 2 components, CF(1) - the catalytic core - and CF(0) - the membrane proton channel. CF(1) has five subunits: alpha(3), beta(3), gamma(1), delta(1), epsilon(1). CF(0) has four main subunits: a, b, b' and c.

Its subcellular location is the plastid. The protein resides in the chloroplast thylakoid membrane. Functionally, key component of the proton channel; it plays a direct role in the translocation of protons across the membrane. In Arabis hirsuta (Hairy rock-cress), this protein is ATP synthase subunit a, chloroplastic.